The sequence spans 551 residues: MIAYIFLALFTIAAVIFIVNSHYRWTYFFAITLFTFLFGGMLMVSSQWQRALNFSSVLFVVLMLFHRLKIHYYKQPLLISDFFLVVDWRNWETLIHYKGALFGVIGLLALLGYAIFGFNDVESLGVLGNSIGALLFIVSFSLMWHYSKNPSAVQVWLDSLPDDGRDVFLNLPMSCRGIFFKVPNFDGNSQNFIEKMTALSSDANNLSETKPDIVVTLMESTLNPHQFAFSQQSIPPLSMFEPQNDTVFASPLRVHTFAGATWKSEFAFLAGVPSTDFGALASGVFYSVVPHLQSGLVKNLKAQGYFCVALSPFTKGNYNAKSAYDHFGFDLMLQPQDLGYPAPISKNLWDISSEEMMKYTRMILEKQHPALENVDQPMFVYVLTMREHGPYELGMENTFNLQMPNLGAKSISALNDYTQRIVALNDAIEGINNYLHERKKPFVLGYFGDHQVAFDNAIPPKKGDYAQPDYVTQFVVRSNCASQFKQEQKFLDLAFAGGVLMNVAGLSAEDEFMKANMAMCKLSDGKLEDSSDIQLLNNYRHYLYQTLAIAR.

Transmembrane regions (helical) follow at residues 1–21 (MIAY…IVNS), 25–45 (WTYF…LMVS), 99–119 (GALF…FGFN), 124–144 (LGVL…SLMW), 266–286 (FAFL…GVFY), and 490–510 (FLDL…SAED).

It is found in the cell membrane. This is an uncharacterized protein from Haemophilus influenzae (strain ATCC 51907 / DSM 11121 / KW20 / Rd).